The sequence spans 323 residues: MSEVLPLLYLHGLSSNDFTPALEQFLGSGAGLSASTITRLTAQWQDEARAFGARDLSATDYVYLWVDGIHLKVRLDQEKLCLLVMLGVRADGRKELVAITDGYRESAESWADLLRDCKRRGMTAPVLAIGDGALGFWKAVREVFPATKEQRCWFHKQANVLAALPKSAHPSALAAIKEIYNAEDIDKAQIAVKAFEADFGAKYPKAVAKITDDLDVLLEFYKYPAEHWIHLRTTNPIESTFATVRLRTKVTKGPGSRAAGLAMAYKLIDAAAARWRAVNAPHLVALVRAGAVFHKGRLLERPTDITPPTSPSDGGQHAGTEVA.

Positions E300 to A323 are disordered. Residues D304–D313 show a composition bias toward low complexity.

It belongs to the transposase mutator family.

Functionally, required for the transposition of the insertion element. This chain is Transposase for insertion sequence element IS6120, found in Mycolicibacterium smegmatis (Mycobacterium smegmatis).